The chain runs to 94 residues: Small ribosomal subunit protein uS17 (94 aa).

A disordered region spans residues Met-1 to Lys-22.

This sequence belongs to the universal ribosomal protein uS17 family. As to quaternary structure, part of the 30S ribosomal subunit.

Its function is as follows. One of the primary rRNA binding proteins, it binds specifically to the 5'-end of 16S ribosomal RNA. This chain is Small ribosomal subunit protein uS17, found in Chlorobium luteolum (strain DSM 273 / BCRC 81028 / 2530) (Pelodictyon luteolum).